We begin with the raw amino-acid sequence, 1505 residues long: Myosin-6 (1505 aa).

Residues 8–57 form the Myosin N-terminal SH3-like domain; it reads SVGSFVWVEDPDEAWIDGEVVQVNGDEIKVLCTSGKHVVTKISNAYPKDV. A Myosin motor domain is found at 62–731; the sequence is SGVDDMTRLA…QMADLDTRRT (670 aa). ATP is bound by residues 156–163 and 209–217; these read GESGAGKT and NNNSSRFGK. 4 actin-binding regions span residues 495-529, 531-554, 589-612, and 612-634; these read LIEKKPGGIIALLDEACMFPRSTHETFAQKLYQTF, THKRFTKPKLARSDFTICHYAGDV, FPPMSDDSKQSKFSSIGTRFKQQL, and LVSLLEILNTTEPHYIRCIKPNN. 6 IQ domains span residues 734-763, 757-786, 782-811, 805-834, 830-859, and 853-882; these read LGRSASIIQRKVRSYLAKKSFIVLRNSAKQ, LRNSAKQIQSVCRGYLARSVYEGMRREAAA, REAAALKIQRDLRRFLARKAYTELYSAAVS, LYSAAVSVQAGMRGMVARKELCFRRQTKAA, QTKAAIIIQTWCRGYLARLHYRKLKKAAIT, and LKKAAITTQCAWRSKVARGELRKLKMAARE. The stretch at 883–1048 forms a coiled coil; sequence TGALQAAKNK…AEKKIMHQQT (166 aa). The region spanning 1148-1452 is the Dilute domain; sequence DRLIQMIGSA…ISSMRTLMTE (305 aa).

This sequence belongs to the TRAFAC class myosin-kinesin ATPase superfamily. Myosin family. Plant myosin class XI subfamily. In terms of assembly, homodimer. Interacts with RABC2A and RABD1. As to expression, expressed in flowers, leaves, roots and stems.

It localises to the cytoplasm. Functionally, myosin heavy chain that is required for the cell cycle-regulated transport of various organelles and proteins for their segregation. Functions by binding with its tail domain to receptor proteins on organelles and exerting force with its N-terminal motor domain against actin filaments, thereby transporting its cargo along polarized actin cables. Involved in the tip growth of root hair cells. Plays a major role in trafficking of Golgi stacks, mitochondria and peroxisomes during root hair development. Targets the peroxisome through an interaction with RABC2A. Required for development of pavement cells, trichomes, and stigmatic papillae. This is Myosin-6 (XI-2) from Arabidopsis thaliana (Mouse-ear cress).